We begin with the raw amino-acid sequence, 647 residues long: 1-deoxy-D-xylulose-5-phosphate synthase (647 aa).

Residues histidine 72 and 113–115 each bind thiamine diphosphate; that span reads GHA. Aspartate 144 contributes to the Mg(2+) binding site. Thiamine diphosphate-binding positions include 145–146, asparagine 174, tyrosine 287, and glutamate 370; that span reads GA. Asparagine 174 is a binding site for Mg(2+).

Belongs to the transketolase family. DXPS subfamily. In terms of assembly, homodimer. It depends on Mg(2+) as a cofactor. The cofactor is thiamine diphosphate.

It catalyses the reaction D-glyceraldehyde 3-phosphate + pyruvate + H(+) = 1-deoxy-D-xylulose 5-phosphate + CO2. The protein operates within metabolic intermediate biosynthesis; 1-deoxy-D-xylulose 5-phosphate biosynthesis; 1-deoxy-D-xylulose 5-phosphate from D-glyceraldehyde 3-phosphate and pyruvate: step 1/1. In terms of biological role, catalyzes the acyloin condensation reaction between C atoms 2 and 3 of pyruvate and glyceraldehyde 3-phosphate to yield 1-deoxy-D-xylulose-5-phosphate (DXP). The sequence is that of 1-deoxy-D-xylulose-5-phosphate synthase from Synechococcus sp. (strain WH7803).